The following is a 273-amino-acid chain: MTSERNTDIEIRLLIEAIYLKYSYDFRNYSGASIKRRILHALRQFDCLTVSALQERVLHDPGMFMQLLQYLTIPVSEMFRDPDHFLAVRNEVVPLLRTWPSIKVWIAGCSTGEEVYSMAILLREEGLLERTIIYATDINPHSLDRAKQGIYSMQSMREYEENYRLAGGRRDFAEYYTAAYGNAIMDSSLRDNVTFADHSLATDSVFSETQLVSCRNVLIYFNKDLQDRALGLFHESLCHRGFLVLGSKESVDFSAYSDRFEPLVKPQRIFRKS.

Residues 1–273 (MTSERNTDIE…VKPQRIFRKS (273 aa)) enclose the CheR-type methyltransferase domain. S-adenosyl-L-methionine-binding positions include Ser76, Arg80, Glu114, Asp137, 199–200 (SL), and 215–216 (RN).

The polypeptide is Putative methyltransferase Cher3 (cheR3) (Pseudomonas putida (strain ATCC 47054 / DSM 6125 / CFBP 8728 / NCIMB 11950 / KT2440)).